We begin with the raw amino-acid sequence, 224 residues long: PKHD-type hydroxylase Shewmr4_3244 (224 aa).

Residues 78–176 (QFYPPLFNRY…RTAAFMWLQS (99 aa)) form the Fe2OG dioxygenase domain. 3 residues coordinate Fe cation: His96, Asp98, and His157. 2-oxoglutarate is bound at residue Arg167.

Fe(2+) is required as a cofactor. L-ascorbate serves as cofactor.

The chain is PKHD-type hydroxylase Shewmr4_3244 from Shewanella sp. (strain MR-4).